We begin with the raw amino-acid sequence, 345 residues long: MAGATDQRRQEVLRAIVADYIASQEPVGSKALLERHNLKVSSATIRNDMAVLESEGYIVQQHASSGRIPTEKAYRTFVDSINDIKPLSVAERRAILGFLERGVDLEDVLKRSVQLLSQLTRQAAVIQLPNLNVSRVKHCEVVLLSPVRLLLVLITDNGRVEQRNVEVDQICEPEHVAKMRDVLNRALDNKTLSDASASLAELAAGEILVDPDIQPMILRCATVLIETLVEQPNDRLILAGASNLTHIAREMPSSLPAMLEALEEQVVVLKLLTNVRDLGHVSVLIGEENEDEQLRGTSVVTTGYGAQGATLGGLGVVGPTFMDYSGTMSKVYAVAHYVSRVLSGG.

This sequence belongs to the HrcA family.

In terms of biological role, negative regulator of class I heat shock genes (grpE-dnaK-dnaJ and groELS operons). Prevents heat-shock induction of these operons. The sequence is that of Heat-inducible transcription repressor HrcA from Corynebacterium diphtheriae (strain ATCC 700971 / NCTC 13129 / Biotype gravis).